A 216-amino-acid chain; its full sequence is Pyrophosphatase PpaX (216 aa).

Catalysis depends on D9, which acts as the Nucleophile.

Belongs to the HAD-like hydrolase superfamily. PpaX family. Mg(2+) serves as cofactor.

The catalysed reaction is diphosphate + H2O = 2 phosphate + H(+). Hydrolyzes pyrophosphate formed during P-Ser-HPr dephosphorylation by HPrK/P. Might play a role in controlling the intracellular pyrophosphate pool. This is Pyrophosphatase PpaX from Bacillus cereus (strain B4264).